Here is a 300-residue protein sequence, read N- to C-terminus: tRNA dimethylallyltransferase (300 aa).

Position 11–18 (G11–S18) interacts with ATP. T13–S18 contributes to the substrate binding site. The tract at residues D35–Q38 is interaction with substrate tRNA.

It belongs to the IPP transferase family. Monomer. It depends on Mg(2+) as a cofactor.

The enzyme catalyses adenosine(37) in tRNA + dimethylallyl diphosphate = N(6)-dimethylallyladenosine(37) in tRNA + diphosphate. Its function is as follows. Catalyzes the transfer of a dimethylallyl group onto the adenine at position 37 in tRNAs that read codons beginning with uridine, leading to the formation of N6-(dimethylallyl)adenosine (i(6)A). The protein is tRNA dimethylallyltransferase of Borrelia turicatae (strain 91E135).